The following is a 206-amino-acid chain: Macrophage immunometabolism regulator (206 aa).

Position 1 is an N-acetylmethionine (Met-1). The interval 1–41 (MEVDINGESRSTLTTLPFPGAEANSPGKAEAEKPRCSSTPC) is disordered. 3 positions are modified to phosphoserine: Ser-25, Ser-140, and Ser-167.

It belongs to the UNC119-binding protein family. As to quaternary structure, interacts with UNC119 and UNC119B; interaction preferentially takes place when UNC119 and UNC119B are unliganded with myristoylated proteins. In terms of processing, phosphorylated. In terms of tissue distribution, high expression in normal macrophages, monocytes, and cultured rheumatoid arthritis synovial fibroblasts (RASFs), with lower expression in B- and T-cells, and little to no expression in other tissues and cell lines.

It localises to the cytoplasm. It is found in the cell projection. The protein localises to the cilium. In terms of biological role, regulates the macrophage function, by enhancing the resolution of inflammation and wound repair functions mediated by M2 macrophages. The regulation of macrophage function is, due at least in part, to its ability to inhibit glycolysis. May also play a role in trafficking of proteins via its interaction with UNC119 and UNC119B cargo adapters: may help the release of UNC119 and UNC119B cargo or the recycling of UNC119 and UNC119B. May play a role in ciliary membrane localization via its interaction with UNC119B and protein transport into photoreceptor cells. This chain is Macrophage immunometabolism regulator, found in Homo sapiens (Human).